Reading from the N-terminus, the 194-residue chain is uncharacterized protein (194 aa).

The tract at residues 45 to 138 (QLLGVPEQHR…AGPPRGDWGV (94 aa)) is disordered. Phosphoserine is present on residues S69 and S76. Residues 97–106 (PPLPPPPVLP) are compositionally biased toward pro residues. The segment covering 107-116 (GPGEELPGAR) has biased composition (low complexity). The span at 117-128 (LPGGGGDDGAGR) shows a compositional bias: gly residues.

This is an uncharacterized protein from Homo sapiens (Human).